A 1712-amino-acid chain; its full sequence is Latent-transforming growth factor beta-binding protein 1 (1712 aa).

The first 23 residues, 1-23 (MAGAWLRWGLLLWAGLLAWSAHG), serve as a signal peptide directing secretion. Residues 65 to 118 (TAASSRALAGPPAERTRRTSQPGGAALPGLRSPLPPEPARPGGPSRQLHSKAGA) are disordered. Residues 181-213 (TKPSCVPPCQNGGMCLRPQLCVCKPGSKGKACE) form the EGF-like 1 domain. 3 disulfides stabilise this stretch: Cys185–Cys195, Cys189–Cys201, and Cys203–Cys212. 2 N-linked (GlcNAc...) asparagine glycosylation sites follow: Asn339 and Asn370. An EGF-like 2 domain is found at 391–423 (RVVICHLPCMNGGQCSSRDKCQCPPNFTGKLCQ). 6 disulfide bridges follow: Cys395–Cys405, Cys399–Cys411, Cys413–Cys422, Cys551–Cys573, Cys560–Cys586, and Cys574–Cys589. Asn416 is a glycosylation site (N-linked (GlcNAc...) asparagine). The TB 1 domain occupies 549-601 (GRCFQETIGSQCGKALPGLSKQEDCCGTVGTSWGFNKCQKCPKKQSYHGYTQM). Asn612 is a glycosylation site (N-linked (GlcNAc...) asparagine). The EGF-like 3; calcium-binding domain occupies 618-658 (DINECQLQGVCPNGECLNTMGSYRCSCKMGFGPDPTFSSCV). 7 disulfides stabilise this stretch: Cys622–Cys633, Cys628–Cys642, Cys644–Cys657, Cys671–Cys694, Cys681–Cys706, Cys695–Cys709, and Cys696–Cys721. Ser639 carries an O-linked (Glc) serine glycan. One can recognise a TB 2 domain in the interval 669–721 (GPCYRLVSPGRHCMHPLSVHLTKQICCCSVGKAWGPHCEKCPLPGTAAFKEIC). The disordered stretch occupies residues 753–799 (NTQPVAKSTHPPPLPAKEEPVEALTSSWEHGPRGAEPEVVTAPPEKE). O-linked (GalNAc...) threonine glycans are attached at residues Thr761 and Thr793. In terms of domain architecture, EGF-like 4; calcium-binding spans 865–906 (EINECTVNPDICGAGHCINLPVRYTCICYEGYKFSEQLRKCV). 37 disulfides stabilise this stretch: Cys869–Cys881, Cys876–Cys890, Cys892–Cys905, Cys911–Cys923, Cys918–Cys932, Cys934–Cys947, Cys953–Cys964, Cys959–Cys973, Cys976–Cys988, Cys994–Cys1005, Cys1000–Cys1014, Cys1017–Cys1028, Cys1034–Cys1045, Cys1040–Cys1054, Cys1056–Cys1069, Cys1075–Cys1086, Cys1081–Cys1095, Cys1097–Cys1110, Cys1116–Cys1127, Cys1122–Cys1136, Cys1138–Cys1151, Cys1157–Cys1169, Cys1164–Cys1178, Cys1180–Cys1192, Cys1198–Cys1210, Cys1204–Cys1219, Cys1221–Cys1234, Cys1240–Cys1252, Cys1246–Cys1261, Cys1263–Cys1276, Cys1282–Cys1294, Cys1289–Cys1303, Cys1305–Cys1319, Cys1340–Cys1363, Cys1350–Cys1375, Cys1364–Cys1380, and Cys1365–Cys1392. The EGF-like 5; calcium-binding domain occupies 907–948 (DIDECAQVRHLCSQGRCENTEGSFLCVCPAGFMASEEGTNCI). Ser929 is a glycosylation site (O-linked (Glc) serine). Positions 949-989 (DVDECLRPDMCRDGRCINTAGAFRCEYCDSGYRMSRRGYCE) constitute an EGF-like 6; calcium-binding domain. (3R)-3-hydroxyasparagine is present on Asn966. Positions 990 to 1029 (DIDECLKPSTCPEEQCVNTPGSYQCVPCTEGFRGWNGQCL) constitute an EGF-like 7; calcium-binding domain. A glycan (O-linked (Glc) serine) is linked at Ser1011. Positions 1030 to 1070 (DVDECLQPKVCTNGSCTNLEGSYMCSCHRGYSPTPDHRHCQ) constitute an EGF-like 8; calcium-binding domain. Asn1042 is a glycosylation site (N-linked (GlcNAc...) asparagine). Ser1051 is a glycosylation site (O-linked (Glc) serine). In terms of domain architecture, EGF-like 9; calcium-binding spans 1071 to 1111 (DIDECQQGNLCMNGQCRNTDGSFRCTCGQGYQLSAAKDQCE). The EGF-like 10; calcium-binding domain occupies 1112–1152 (DIDECEHHHLCSHGQCRNTEGSFQCVCNQGYRASVLGDHCE). Asn1129 is subject to (3R)-3-hydroxyasparagine. An O-linked (Glc) serine glycan is attached at Ser1133. An EGF-like 11; calcium-binding domain is found at 1153-1193 (DINECLEDSSVCQGGDCINTAGSYDCTCPDGFQLNDNKGCQ). Residues 1194–1235 (DINECAQPGLCGSHGECLNTQGSFHCVCEQGFSISADGRTCE) enclose the EGF-like 12; calcium-binding domain. The O-linked (Glc) serine glycan is linked to Ser1216. The EGF-like 13; calcium-binding domain occupies 1236–1277 (DIDECVNNTVCDSHGFCDNTAGSFRCLCYQGFQAPQDGQGCV). N-linked (GlcNAc...) asparagine glycosylation is present at Asn1242. The 43-residue stretch at 1278 to 1320 (DVNECELLSGVCGEAFCENVEGSFLCVCADENQEYSPMTGQCR) folds into the EGF-like 14; calcium-binding domain. Residues 1335–1402 (EEKKECYYNL…PRGKGLVPAG (68 aa)) form an 8-Cys3 region region. The TB 3 domain occupies 1338–1392 (KECYYNLNDASLCDNVLAPNVTKQECCCTSGAGWGDNCEIFPCPVQGTAEFTEMC). A glycan (N-linked (GlcNAc...) asparagine) is linked at Asn1357. Ser1405 carries the post-translational modification Phosphoserine. The EGF-like 15; calcium-binding domain occupies 1415-1457 (DADECLLFGEEICKNGYCLNTQPGYECYCKQGTYYDPVKLQCF). 10 disulfide bridges follow: Cys1419–Cys1432, Cys1427–Cys1441, Cys1443–Cys1456, Cys1462–Cys1473, Cys1468–Cys1482, Cys1484–Cys1497, Cys1517–Cys1541, Cys1527–Cys1553, Cys1542–Cys1556, and Cys1543–Cys1568. Residues 1458–1498 (DMDECQDPNSCIDGQCVNTEGSYNCFCTHPMVLDASEKRCV) enclose the EGF-like 16; calcium-binding domain. O-linked (Glc) serine glycosylation occurs at Ser1479. The C-terminal domain stretch occupies residues 1498 to 1712 (VQPTESNEQI…LNLDKESDLE (215 aa)). A TB 4 domain is found at 1515–1568 (DLCWEHLSEEYVCSRPLVGKQTTYTECCCLYGEAWGMQCALCPMKDSDDYAQLC). A phosphoserine mark is found at Ser1588 and Ser1607. Residues 1612 to 1652 (QAEECGILNGCENGRCVRVQEGYTCDCFDGYHLDMAKMTCV) form the EGF-like 17 domain. 6 disulfide bridges follow: Cys1616-Cys1627, Cys1622-Cys1636, Cys1638-Cys1651, Cys1657-Cys1672, Cys1667-Cys1681, and Cys1683-Cys1696. In terms of domain architecture, EGF-like 18; calcium-binding spans 1653 to 1697 (DVNECSELNNRMSLCKNAKCINTEGSYKCLCLPGYIPSDKPNYCT). A glycan (O-linked (Glc) serine) is linked at Ser1678.

This sequence belongs to the LTBP family. As to quaternary structure, interacts with TGFB1; associates via disulfide bonds with the Latency-associated peptide chain (LAP) regulatory chain of TGFB1, leading to regulate activation of TGF-beta-1. LTBP1 does not bind directly to TGF-beta-1, the active chain of TGFB1. Interacts (via C-terminal domain) with FBN1 (via N-terminal domain). Interacts with FBN2. Interacts with ADAMTSL2. Interacts with EFEMP2. Post-translationally, contains hydroxylated asparagine residues. Two intrachain disulfide bonds from the TB3 domain are rearranged upon TGFB1 binding, and form interchain bonds with TGFB1 propeptide, anchoring it to the extracellular matrix. In terms of processing, O-glycosylated on serine residues by POGLUT2 and POGLUT3.

The protein localises to the secreted. It is found in the extracellular space. The protein resides in the extracellular matrix. Its function is as follows. Key regulator of transforming growth factor beta (TGFB1, TGFB2 and TGFB3) that controls TGF-beta activation by maintaining it in a latent state during storage in extracellular space. Associates specifically via disulfide bonds with the Latency-associated peptide (LAP), which is the regulatory chain of TGF-beta, and regulates integrin-dependent activation of TGF-beta. Outcompeted by LRRC32/GARP for binding to LAP regulatory chain of TGF-beta. In Mus musculus (Mouse), this protein is Latent-transforming growth factor beta-binding protein 1.